We begin with the raw amino-acid sequence, 263 residues long: MGILVISVDLQCCRCDAKIRKVLGCLEEEYCIEKVEYDVKNNRVIVRGKFDPEKLCKKIWCKAGKIIKEILIVDVWPPPLPPPCKPPPCEKPPEDCKPKPCHCCSCEKPKPKPKPCHCEKPKPCHCEKPKPCEKPPPCKPEEPPKPPPEKPPPKPECKLVPYPYPVPYPYAGQWCCPKPEPPKPPPEPPKEPEPPKPCGCSHAFVCVCKPAPPPPPPCGCSGGHGNCGCGIRPWPPQVWPPPPVCPPPPWCYTEDNANACSIM.

In terms of domain architecture, HMA spans methionine 1–lysine 68. A metal cation is bound by residues cysteine 12 and cysteine 15. Residues cysteine 126–proline 153 are disordered. Residues lysine 139–proline 153 show a composition bias toward basic and acidic residues.

In terms of biological role, involved in defense responses. Contributes to slowing defense responses toward Magnaporthe oryzae. This is Protein PYRICULARIA ORYZAE RESISTANCE 21 from Oryza sativa subsp. indica (Rice).